Consider the following 467-residue polypeptide: MAENNTDTKSSNQMWGGRFASGPDAIMEEINASIGFDKKLFAQDIRGSIAHATMLAHQGIISSDDKDKIVHGLNTILSEIESGNFEFSRQLEDIHMNVEARLATLIGPAAGRLHTARSRNDQVALDFRLWVKEELQKTEQMLTGLIAAFLDRAEEHAESVMPGFTHLQTAQPVTFGHHCMAYVEMFGRDRSRVRHAIEHLDESPIGAAALAGTGYPIDRHMTAKALGFREPTRNSIDTVSDRDFAIEFLAIAAIAGMHLSRLAEEIVIWSTPQFGFVRLSDAFSTGSSIMPQKKNPDAAELVRAKTGRINGSLIALLTIMKGLPLAYSKDMQEDKEQVFDAAESLELAIAAMTGMVRDMTVNTARMKAAAGSGFSTATDLADWLVREAGLPFRDAHHVTGRAVALAESKGCDLAELPLSDLQAIHSAITDKVYDVLTVEASVASRKSFGGTAPSEVRKQIAFWRARN.

Belongs to the lyase 1 family. Argininosuccinate lyase subfamily.

It is found in the cytoplasm. It carries out the reaction 2-(N(omega)-L-arginino)succinate = fumarate + L-arginine. The protein operates within amino-acid biosynthesis; L-arginine biosynthesis; L-arginine from L-ornithine and carbamoyl phosphate: step 3/3. In Rhizobium etli (strain ATCC 51251 / DSM 11541 / JCM 21823 / NBRC 15573 / CFN 42), this protein is Argininosuccinate lyase.